The primary structure comprises 513 residues: ATP synthase subunit alpha 1 (513 aa).

Residue 169–176 participates in ATP binding; sequence GDRQCGKT.

It belongs to the ATPase alpha/beta chains family. As to quaternary structure, F-type ATPases have 2 components, CF(1) - the catalytic core - and CF(0) - the membrane proton channel. CF(1) has five subunits: alpha(3), beta(3), gamma(1), delta(1), epsilon(1). CF(0) has three main subunits: a(1), b(2) and c(9-12). The alpha and beta chains form an alternating ring which encloses part of the gamma chain. CF(1) is attached to CF(0) by a central stalk formed by the gamma and epsilon chains, while a peripheral stalk is formed by the delta and b chains.

The protein localises to the cell inner membrane. It carries out the reaction ATP + H2O + 4 H(+)(in) = ADP + phosphate + 5 H(+)(out). Functionally, produces ATP from ADP in the presence of a proton gradient across the membrane. The alpha chain is a regulatory subunit. This is ATP synthase subunit alpha 1 from Burkholderia thailandensis (strain ATCC 700388 / DSM 13276 / CCUG 48851 / CIP 106301 / E264).